Here is an 832-residue protein sequence, read N- to C-terminus: Mechanosensitive cation channel TMEM63B (832 aa).

At 1–40 (MLPFLLATLGTAALNSSNPKDYCYSARIRSTVLQGLPFGG) the chain is on the extracellular side. A helical membrane pass occupies residues 41–65 (VPTVLALDFMCFLALLFLFSILRKV). C51 carries the S-palmitoyl cysteine lipid modification. At 66–145 (AWDYGRLALV…KDDEIRDKCG (80 aa)) the chain is on the cytoplasmic side. Positions 86 to 88 (RER) match the Mediates endoplasmic reticulum retention motif. Residues S111, S113, S114, and S115 each carry the phosphoserine modification. C126 carries S-palmitoyl cysteine lipidation. The chain crosses the membrane as a helical span at residues 146–178 (GDAVHYLSFQRHIIGLLVVVGVLSVGIVLPVNF). The Extracellular portion of the chain corresponds to 179–202 (SGDLLENNAYSFGRTTIANLKSGN). Residues 203 to 227 (NLLWLHTSFAFLYLLLTVYSMRRHT) traverse the membrane as a helical segment. Topologically, residues 228-427 (SKMRYKEDDL…IYWEHLSIRG (200 aa)) are cytoplasmic. Residues 231–426 (RYKEDDLVKR…NIYWEHLSIR (196 aa)) are intracellular linker IL2; confers mechanosensitivity. 2 S-palmitoyl cysteine lipidation sites follow: C382 and C398. A helical transmembrane segment spans residues 428-457 (FIWWLRCLVINVVLFILLFFLTTPAIIITT). Over 458–472 (MDKFNVTKPVEYLNN) the chain is Extracellular. N462 is a glycosylation site (N-linked (GlcNAc...) asparagine). The chain crosses the membrane as a helical span at residues 473–502 (PIITQFFPTLLLWCFSALLPTIVYYSAFFE). At 503–506 (AHWT) the chain is on the cytoplasmic side. A helical transmembrane segment spans residues 507-543 (RSGENRTTMHKCYTFLIFMVLLLPSLGLSSLDLFFRW). The Extracellular portion of the chain corresponds to 544–566 (LFDKKFLAEAAIRFECVFLPDNG). Residues 567 to 599 (AFFVNYVIASAFIGNAMDLLRIPGLLMYMIRLC) form a helical membrane-spanning segment. A gating helix region spans residues 567–599 (AFFVNYVIASAFIGNAMDLLRIPGLLMYMIRLC). Topologically, residues 600 to 619 (LARSAAERRNVKRHQAYEFQ) are cytoplasmic. A helical transmembrane segment spans residues 620–638 (FGAAYAWMMCVFTVVMTYS). Residues 639–641 (ITC) are Extracellular-facing. The chain crosses the membrane as a helical span at residues 642 to 666 (PIIVPFGLMYMLLKHLVDRYNLYYA). Residues 667–673 (YLPAKLD) are Cytoplasmic-facing. A helical membrane pass occupies residues 674-702 (KKIHSGAVNQVVAAPILCLFWLLFFSTMR). Over 703–707 (TGFLA) the chain is Extracellular. Residues 708–728 (PTSMFTFVVLVITIVICLCHV) traverse the membrane as a helical segment. S-palmitoyl cysteine attachment occurs at residues C726 and C729. The Cytoplasmic segment spans residues 729 to 832 (CFGHFKYLSA…DSLIENEIHQ (104 aa)). Disordered regions lie at residues 748–767 (TDAV…AVPK) and 776–818 (LQDS…DTDF). Residues 749 to 758 (DAVSSRSNGR) show a composition bias toward polar residues. The segment covering 789-801 (PGSSGDEPPSSSS) has biased composition (low complexity).

The protein belongs to the CSC1 (TC 1.A.17) family. In terms of assembly, monomer. Interacts with SLC19A2; interaction is required for the phospholipid scramblase activity. Post-translationally, palmitoylation is required for localization to the plasma membrane and stability. In terms of tissue distribution, expressed in cochlear hair cells (at protein level). Highly expressed in the subfornical organ of the brain. Expressed in small intestine. Brain-specific.

Its subcellular location is the cell membrane. It is found in the endoplasmic reticulum membrane. The protein resides in the lysosome membrane. The protein localises to the early endosome membrane. The enzyme catalyses Ca(2+)(in) = Ca(2+)(out). The catalysed reaction is Mg(2+)(in) = Mg(2+)(out). It catalyses the reaction K(+)(in) = K(+)(out). It carries out the reaction Na(+)(in) = Na(+)(out). The enzyme catalyses Cs(+)(in) = Cs(+)(out). The catalysed reaction is a 1,2-diacyl-sn-glycero-3-phosphocholine(in) = a 1,2-diacyl-sn-glycero-3-phosphocholine(out). It catalyses the reaction a sphingomyelin(in) = a sphingomyelin(out). Mechanosensitive cation channel with low conductance and high activation threshold. Osmosensitive cation channel preferentially activated by hypotonic stress. Also acts as a phospholipid scramblase in response to changes in membrane structure: upon changes in membrane curvature and thickness, alters its conformation and translocates phospholipids, such as phosphatidylcholine and sphingomyelin, thereby controlling plasma membrane lipid distribution. Forms a heterodimer with SLC19A2, which mediates phospholipid scramblase activity following Ca(2+) stimulation. Expressed in excitatory neurons of the subfornical organ and functions as a thirst receptor that mediates neuronal response to hyperosmolality to drive thirst and drinking behavior. Facilitates intestinal motility by promoting proliferation of intestinal stem cells. Essential for the baby's first breath and respiration throughout life. Upon lung inflation conducts cation currents in alveolar type 1 and 2 cells triggering lamellar body exocytosis and surfactant secretion into airspace. Acts as an osmosensor in cochlear outer hair cells (OHCs) where it mediates calcium influx and regulatory volume decrease response. Required for the maintenance of OHC morphology, OHC survival and normal hearing. Its function is as follows. Brain-specific osmosensitive calcium channel isoform. The protein is Mechanosensitive cation channel TMEM63B of Mus musculus (Mouse).